A 307-amino-acid chain; its full sequence is Ribosomal RNA small subunit methyltransferase H (307 aa).

S-adenosyl-L-methionine contacts are provided by residues 33-35 (GGY), Asp-51, Phe-78, Asp-96, and Gln-103.

Belongs to the methyltransferase superfamily. RsmH family.

The protein resides in the cytoplasm. It carries out the reaction cytidine(1402) in 16S rRNA + S-adenosyl-L-methionine = N(4)-methylcytidine(1402) in 16S rRNA + S-adenosyl-L-homocysteine + H(+). Specifically methylates the N4 position of cytidine in position 1402 (C1402) of 16S rRNA. This chain is Ribosomal RNA small subunit methyltransferase H, found in Rickettsia conorii (strain ATCC VR-613 / Malish 7).